Reading from the N-terminus, the 508-residue chain is General transcription factor IIF subunit 1 (508 aa).

An N-acetylalanine modification is found at alanine 2. Threonine 156 carries the phosphothreonine modification. Positions 177 to 446 are disordered; it reads MQQRRLKDQD…TPSSGDVQVT (270 aa). Phosphoserine occurs at positions 217, 218, 221, and 224. Residues 232–251 are compositionally biased toward basic residues; that stretch reads SKAKKKAPVTKAGRKKKKKK. Acidic residues-rich tracts occupy residues 255 to 270 and 303 to 325; these read DEAF…EGQE and EQSE…EEEE. Threonine 331 is subject to Phosphothreonine. Acidic residues predominate over residues 343–355; that stretch reads DDSDSSEESDIDS. The segment covering 364–374 has biased composition (basic residues); that stretch reads AKKKTPPKRER. Phosphoserine is present on residues serine 377, serine 380, serine 381, and serine 385. Over residues 378–388 the composition is skewed to polar residues; it reads GGSSKGTSRPG. The residue at position 389 (threonine 389) is a Phosphothreonine. A compositionally biased stretch (low complexity) spans 389–406; the sequence is TPSAEAASTSSTLRAAAS. Serine 391 is modified (phosphoserine). Residue lysine 407 is modified to N6-acetyllysine. Residues 428 to 443 are compositionally biased toward polar residues; the sequence is GPQSLSGKSTPSSGDV. 3 positions are modified to phosphoserine: serine 431, serine 433, and serine 436. Threonine 437 bears the Phosphothreonine mark. Serine 440 carries the phosphoserine modification.

Belongs to the TFIIF alpha subunit family. Heterodimer of an alpha and a beta subunit. Interacts with GTF2F2, CTDP1, TAF6/TAFII80 and URI1. Interacts with GTF2B (via C-terminus and preferentially via acetylated form); this interaction prevents binding of GTF2B to GTF2F2. Part of TBP-based Pol II pre-initiation complex (PIC), in which Pol II core assembles with general transcription factors and other specific initiation factors including GTF2E1, GTF2E2, GTF2F1, GTF2F2, TCEA1, ERCC2, ERCC3, GTF2H2, GTF2H3, GTF2H4, GTF2H5, GTF2A1, GTF2A2, GTF2B and TBP; this large multi-subunit PIC complex mediates DNA unwinding and targets Pol II core to the transcription start site where the first phosphodiester bond forms. Phosphorylated on Ser and other residues by TAF1 and casein kinase II-like kinases.

It localises to the nucleus. In terms of biological role, TFIIF is a general transcription initiation factor that binds to RNA polymerase II and helps to recruit it to the initiation complex in collaboration with TFIIB. It promotes transcription elongation. This is General transcription factor IIF subunit 1 (Gtf2f1) from Mus musculus (Mouse).